Consider the following 141-residue polypeptide: 6,7-dimethyl-8-ribityllumazine synthase (141 aa).

5-amino-6-(D-ribitylamino)uracil-binding positions include phenylalanine 11, 42–44 (ALE), and 66–68 (VVI). 71–72 (ET) provides a ligand contact to (2S)-2-hydroxy-3-oxobutyl phosphate. The active-site Proton donor is histidine 74. Asparagine 98 contributes to the 5-amino-6-(D-ribitylamino)uracil binding site. Residue arginine 112 participates in (2S)-2-hydroxy-3-oxobutyl phosphate binding.

It belongs to the DMRL synthase family.

The enzyme catalyses (2S)-2-hydroxy-3-oxobutyl phosphate + 5-amino-6-(D-ribitylamino)uracil = 6,7-dimethyl-8-(1-D-ribityl)lumazine + phosphate + 2 H2O + H(+). It participates in cofactor biosynthesis; riboflavin biosynthesis; riboflavin from 2-hydroxy-3-oxobutyl phosphate and 5-amino-6-(D-ribitylamino)uracil: step 1/2. In terms of biological role, catalyzes the formation of 6,7-dimethyl-8-ribityllumazine by condensation of 5-amino-6-(D-ribitylamino)uracil with 3,4-dihydroxy-2-butanone 4-phosphate. This is the penultimate step in the biosynthesis of riboflavin. This chain is 6,7-dimethyl-8-ribityllumazine synthase, found in Sphingopyxis alaskensis (strain DSM 13593 / LMG 18877 / RB2256) (Sphingomonas alaskensis).